Here is a 185-residue protein sequence, read N- to C-terminus: NADH-quinone oxidoreductase subunit B (185 aa).

Positions 38, 39, 104, and 133 each coordinate [4Fe-4S] cluster.

This sequence belongs to the complex I 20 kDa subunit family. In terms of assembly, NDH-1 is composed of 14 different subunits. Subunits NuoB, C, D, E, F, and G constitute the peripheral sector of the complex. Requires [4Fe-4S] cluster as cofactor.

It is found in the cell membrane. The enzyme catalyses a quinone + NADH + 5 H(+)(in) = a quinol + NAD(+) + 4 H(+)(out). In terms of biological role, NDH-1 shuttles electrons from NADH, via FMN and iron-sulfur (Fe-S) centers, to quinones in the respiratory chain. The immediate electron acceptor for the enzyme in this species is believed to be a menaquinone. Couples the redox reaction to proton translocation (for every two electrons transferred, four hydrogen ions are translocated across the cytoplasmic membrane), and thus conserves the redox energy in a proton gradient. The protein is NADH-quinone oxidoreductase subunit B of Cutibacterium acnes (strain DSM 16379 / KPA171202) (Propionibacterium acnes).